A 456-amino-acid polypeptide reads, in one-letter code: Bifunctional protein GlmU (456 aa).

Residues 1 to 229 (MYNCAIILAA…FEETMGVNSR (229 aa)) are pyrophosphorylase. UDP-N-acetyl-alpha-D-glucosamine-binding positions include 8–11 (LAAG), K22, Q73, and 78–79 (GT). D103 contributes to the Mg(2+) binding site. UDP-N-acetyl-alpha-D-glucosamine-binding residues include G140, E155, N170, and N227. Residue N227 coordinates Mg(2+). Residues 230 to 250 (VQLAEAEKIMRNRINKIHMEN) are linker. Residues 251–456 (GVTLIDHNNT…SWVYKKGLKK (206 aa)) are N-acetyltransferase. 2 residues coordinate UDP-N-acetyl-alpha-D-glucosamine: R332 and K350. H362 serves as the catalytic Proton acceptor. UDP-N-acetyl-alpha-D-glucosamine is bound by residues Y365 and N376. Residues 385 to 386 (NY), A422, and R439 contribute to the acetyl-CoA site.

This sequence in the N-terminal section; belongs to the N-acetylglucosamine-1-phosphate uridyltransferase family. The protein in the C-terminal section; belongs to the transferase hexapeptide repeat family. In terms of assembly, homotrimer. The cofactor is Mg(2+).

It is found in the cytoplasm. The enzyme catalyses alpha-D-glucosamine 1-phosphate + acetyl-CoA = N-acetyl-alpha-D-glucosamine 1-phosphate + CoA + H(+). It carries out the reaction N-acetyl-alpha-D-glucosamine 1-phosphate + UTP + H(+) = UDP-N-acetyl-alpha-D-glucosamine + diphosphate. It functions in the pathway nucleotide-sugar biosynthesis; UDP-N-acetyl-alpha-D-glucosamine biosynthesis; N-acetyl-alpha-D-glucosamine 1-phosphate from alpha-D-glucosamine 6-phosphate (route II): step 2/2. Its pathway is nucleotide-sugar biosynthesis; UDP-N-acetyl-alpha-D-glucosamine biosynthesis; UDP-N-acetyl-alpha-D-glucosamine from N-acetyl-alpha-D-glucosamine 1-phosphate: step 1/1. It participates in bacterial outer membrane biogenesis; LPS lipid A biosynthesis. In terms of biological role, catalyzes the last two sequential reactions in the de novo biosynthetic pathway for UDP-N-acetylglucosamine (UDP-GlcNAc). The C-terminal domain catalyzes the transfer of acetyl group from acetyl coenzyme A to glucosamine-1-phosphate (GlcN-1-P) to produce N-acetylglucosamine-1-phosphate (GlcNAc-1-P), which is converted into UDP-GlcNAc by the transfer of uridine 5-monophosphate (from uridine 5-triphosphate), a reaction catalyzed by the N-terminal domain. The protein is Bifunctional protein GlmU of Clostridium kluyveri (strain NBRC 12016).